The sequence spans 139 residues: Ribonuclease P protein component (139 aa).

The disordered stretch occupies residues 116–139 (FSKNKSTIGGEYSPKNEQCESELP).

Belongs to the RnpA family. Consists of a catalytic RNA component (M1 or rnpB) and a protein subunit.

It carries out the reaction Endonucleolytic cleavage of RNA, removing 5'-extranucleotides from tRNA precursor.. RNaseP catalyzes the removal of the 5'-leader sequence from pre-tRNA to produce the mature 5'-terminus. It can also cleave other RNA substrates such as 4.5S RNA. The protein component plays an auxiliary but essential role in vivo by binding to the 5'-leader sequence and broadening the substrate specificity of the ribozyme. The sequence is that of Ribonuclease P protein component from Chlamydia abortus (strain DSM 27085 / S26/3) (Chlamydophila abortus).